A 62-amino-acid polypeptide reads, in one-letter code: MKPESFDLTIEQMFEFRRMQDATANISQEQALELLVQASRLLMIKSNVIRDLMRQAPLEPLG.

This sequence to Synechococcus PCC 7942 NblA and some, to chloroplast ycf18.

The protein is Phycobilisome degradation protein NblA homolog 1 of Synechocystis sp. (strain ATCC 27184 / PCC 6803 / Kazusa).